Consider the following 406-residue polypeptide: Cysteine desulfurase (406 aa).

Residue K226 is modified to N6-(pyridoxal phosphate)lysine. C364 serves as the catalytic Cysteine persulfide intermediate.

Belongs to the class-V pyridoxal-phosphate-dependent aminotransferase family. Csd subfamily. In terms of assembly, homodimer. Interacts with SufE and the SufBCD complex composed of SufB, SufC and SufD. The interaction with SufE is required to mediate the direct transfer of the sulfur atom from the S-sulfanylcysteine. Requires pyridoxal 5'-phosphate as cofactor.

It is found in the cytoplasm. The enzyme catalyses (sulfur carrier)-H + L-cysteine = (sulfur carrier)-SH + L-alanine. The catalysed reaction is L-selenocysteine + AH2 = hydrogenselenide + L-alanine + A + H(+). It participates in cofactor biosynthesis; iron-sulfur cluster biosynthesis. Its function is as follows. Cysteine desulfurases mobilize the sulfur from L-cysteine to yield L-alanine, an essential step in sulfur metabolism for biosynthesis of a variety of sulfur-containing biomolecules. Component of the suf operon, which is activated and required under specific conditions such as oxidative stress and iron limitation. Acts as a potent selenocysteine lyase in vitro, that mobilizes selenium from L-selenocysteine. Selenocysteine lyase activity is however unsure in vivo. The polypeptide is Cysteine desulfurase (Escherichia coli O7:K1 (strain IAI39 / ExPEC)).